Consider the following 277-residue polypeptide: Carbonyl reductase [NADPH] 1 (277 aa).

An N-acetylserine modification is found at Ser2. Phosphoserine occurs at positions 2 and 30. NADP(+) contacts are provided by residues 10-34 (VTGG…GDVV), 63-64 (DI), and Asn90. Residues 95 to 97 (FKV) and Gln106 contribute to the glutathione site. Residue Ser140 coordinates substrate. 193–194 (AY) provides a ligand contact to glutathione. Tyr194 acts as the Proton acceptor in catalysis. NADP(+) contacts are provided by residues 194 to 198 (YGVTK) and 231 to 233 (VRT). At Lys239 the chain carries N6-1-carboxyethyl lysine.

This sequence belongs to the short-chain dehydrogenases/reductases (SDR) family. In terms of assembly, monomer. As to expression, expressed in kidney (at protein level).

Its subcellular location is the cytoplasm. It catalyses the reaction a secondary alcohol + NADP(+) = a ketone + NADPH + H(+). The enzyme catalyses a primary alcohol + NADP(+) = an aldehyde + NADPH + H(+). The catalysed reaction is prostaglandin F2alpha + NADP(+) = prostaglandin E2 + NADPH + H(+). It carries out the reaction prostaglandin E1 + NADP(+) = 15-oxoprostaglandin E1 + NADPH + H(+). It catalyses the reaction menadione + NADPH + H(+) = menadiol + NADP(+). The enzyme catalyses prostaglandin D2 + NADP(+) = 15-oxoprostaglandin D2 + NADPH + H(+). The catalysed reaction is prostaglandin E2 + NADP(+) = 15-oxoprostaglandin E2 + NADPH + H(+). It carries out the reaction prostaglandin F2alpha + NADP(+) = 15-oxoprostaglandin F2alpha + NADPH + H(+). It catalyses the reaction daunorubicin + NADPH + H(+) = 13-dihydrodaunorubicin + NADP(+). The enzyme catalyses S-nitrosoglutathione + NADPH + H(+) = S-(hydroxysulfenamide)glutathione + NADP(+). The catalysed reaction is cortisol + NADPH + H(+) = 20beta-dihydrocortisol + NADP(+). It carries out the reaction corticosterone + NADPH + H(+) = 20beta-dihydrocorticosterone + NADP(+). With respect to regulation, inhibited by quercetin, rutenin and its derivatives. NADPH-dependent reductase with broad substrate specificity. Catalyzes the reduction of a wide variety of carbonyl compounds including quinones, prostaglandins, menadione, plus various xenobiotics. Catalyzes the reduction of the antitumor anthracyclines doxorubicin and daunorubicin to the cardiotoxic compounds doxorubicinol and daunorubicinol. Can convert prostaglandin E to prostaglandin F2-alpha. Can bind glutathione, which explains its higher affinity for glutathione-conjugated substrates. Catalyzes the reduction of S-nitrosoglutathione. In addition, participates in the glucocorticoid metabolism by catalyzing the NADPH-dependent cortisol/corticosterone into 20beta-dihydrocortisol (20b-DHF) or 20beta-corticosterone (20b-DHB), which are weak agonists of NR3C1 and NR3C2 in adipose tissue. The polypeptide is Carbonyl reductase [NADPH] 1 (Homo sapiens (Human)).